We begin with the raw amino-acid sequence, 40 residues long: Snaclec LmrLEC-1 (40 aa).

A disulfide bond links C2 and C13.

Belongs to the snaclec family. As to quaternary structure, dimer (non-covalently linked) of heterodimers of subunits alpha and beta (disulfide-linked). Expressed by the venom gland.

It is found in the secreted. Functionally, interferes with one step of hemostasis (modulation of platelet aggregation, or coagulation cascade, for example). The chain is Snaclec LmrLEC-1 from Lachesis muta rhombeata (Bushmaster).